We begin with the raw amino-acid sequence, 446 residues long: Serum factor response D (446 aa).

One can recognise an MADS-box domain in the interval 1 to 61; the sequence is MGRKKIKIQR…PNAKEKYFQY (61 aa). Disordered stretches follow at residues 95-195, 210-296, and 319-432; these read KKEK…FNSS, TQEN…CQQV, and CSSP…SNLN. Over residues 112–121 the composition is skewed to basic and acidic residues; that stretch reads SHSEEEDHKS. Basic residues predominate over residues 133–142; the sequence is HHNHHHHHHQ. Low complexity-rich tracts occupy residues 143-195 and 216-282; these read YNNN…FNSS and HYNN…NNNN. Residues 322–355 are compositionally biased toward polar residues; that stretch reads PEDTSPMTSPRTPPFSSTNTNTLQTSPNSQQKSK. A compositionally biased stretch (low complexity) spans 365-432; that stretch reads NNNQNNNNQN…SPTSSSSNLN (68 aa).

The protein resides in the nucleus. This is Serum factor response D (srfD) from Dictyostelium discoideum (Social amoeba).